The chain runs to 629 residues: tRNA uridine 5-carboxymethylaminomethyl modification enzyme MnmG (629 aa).

Residues Gly-13–Gly-18, Val-125, and Ser-180 contribute to the FAD site. Gly-273 to Phe-287 lines the NAD(+) pocket. Gln-370 provides a ligand contact to FAD.

It belongs to the MnmG family. Homodimer. Heterotetramer of two MnmE and two MnmG subunits. Requires FAD as cofactor.

Its subcellular location is the cytoplasm. Its function is as follows. NAD-binding protein involved in the addition of a carboxymethylaminomethyl (cmnm) group at the wobble position (U34) of certain tRNAs, forming tRNA-cmnm(5)s(2)U34. This Shewanella sp. (strain MR-7) protein is tRNA uridine 5-carboxymethylaminomethyl modification enzyme MnmG.